We begin with the raw amino-acid sequence, 230 residues long: Cytochrome c oxidase subunit 2 (230 aa).

The Mitochondrial intermembrane segment spans residues 1–26 (MATPAQLGLMDAASPVMEEMIYFHDH). A helical membrane pass occupies residues 27-48 (VMLVLILITCLIFYSMLVLISS). The Mitochondrial matrix portion of the chain corresponds to 49-62 (KYIYRFLTDGHVIE). Residues 63–82 (TVWTVIPAIILVVVALPSLK) traverse the membrane as a helical segment. Topologically, residues 83 to 230 (LLYLTDELDN…GWCDMMLDEE (148 aa)) are mitochondrial intermembrane. Residues H161, C196, E198, C200, H204, and M207 each contribute to the Cu cation site. E198 contributes to the Mg(2+) binding site.

This sequence belongs to the cytochrome c oxidase subunit 2 family. As to quaternary structure, component of the cytochrome c oxidase (complex IV, CIV), a multisubunit enzyme composed of a catalytic core of 3 subunits and several supernumerary subunits. The complex exists as a monomer or a dimer and forms supercomplexes (SCs) in the inner mitochondrial membrane with ubiquinol-cytochrome c oxidoreductase (cytochrome b-c1 complex, complex III, CIII). Requires Cu cation as cofactor.

The protein localises to the mitochondrion inner membrane. The catalysed reaction is 4 Fe(II)-[cytochrome c] + O2 + 8 H(+)(in) = 4 Fe(III)-[cytochrome c] + 2 H2O + 4 H(+)(out). Functionally, component of the cytochrome c oxidase, the last enzyme in the mitochondrial electron transport chain which drives oxidative phosphorylation. The respiratory chain contains 3 multisubunit complexes succinate dehydrogenase (complex II, CII), ubiquinol-cytochrome c oxidoreductase (cytochrome b-c1 complex, complex III, CIII) and cytochrome c oxidase (complex IV, CIV), that cooperate to transfer electrons derived from NADH and succinate to molecular oxygen, creating an electrochemical gradient over the inner membrane that drives transmembrane transport and the ATP synthase. Cytochrome c oxidase is the component of the respiratory chain that catalyzes the reduction of oxygen to water. Electrons originating from reduced cytochrome c in the intermembrane space (IMS) are transferred via the dinuclear copper A center (CU(A)) of subunit 2 and heme A of subunit 1 to the active site in subunit 1, a binuclear center (BNC) formed by heme A3 and copper B (CU(B)). The BNC reduces molecular oxygen to 2 water molecules using 4 electrons from cytochrome c in the IMS and 4 protons from the mitochondrial matrix. The polypeptide is Cytochrome c oxidase subunit 2 (COII) (Branchiostoma floridae (Florida lancelet)).